A 387-amino-acid polypeptide reads, in one-letter code: Zinc finger protein neuro-d4 (387 aa).

Glycyl lysine isopeptide (Lys-Gly) (interchain with G-Cter in SUMO2) cross-links involve residues lysine 106, lysine 129, and lysine 133. The C2H2-type zinc-finger motif lies at 195–218 (YVCDICGKRYKNRPGLSYHYTHTH). PHD-type zinc fingers lie at residues 271–328 (NGYC…CKSC) and 325–375 (CKSC…CLRH). Residues cysteine 274, cysteine 277, cysteine 293, cysteine 296, histidine 301, cysteine 304, cysteine 322, cysteine 325, cysteine 328, cysteine 331, cysteine 343, cysteine 346, histidine 351, cysteine 354, cysteine 369, and cysteine 372 each coordinate Zn(2+).

Belongs to the requiem/DPF family. As to quaternary structure, component of neuron-specific chromatin remodeling complex (nBAF complex) composed of at least, ARID1A/BAF250A or ARID1B/BAF250B, SMARCD1/BAF60A, SMARCD3/BAF60C, SMARCA2/BRM/BAF190B, SMARCA4/BRG1/BAF190A, SMARCB1/BAF47, SMARCC1/BAF155, SMARCE1/BAF57, SMARCC2/BAF170, DPF1/BAF45B, DPF3/BAF45C, ACTL6B/BAF53B and actin.

It is found in the cytoplasm. The protein localises to the nucleus. Functionally, may have an important role in developing neurons by participating in regulation of cell survival, possibly as a neurospecific transcription factor. Belongs to the neuron-specific chromatin remodeling complex (nBAF complex). During neural development a switch from a stem/progenitor to a postmitotic chromatin remodeling mechanism occurs as neurons exit the cell cycle and become committed to their adult state. The transition from proliferating neural stem/progenitor cells to postmitotic neurons requires a switch in subunit composition of the npBAF and nBAF complexes. As neural progenitors exit mitosis and differentiate into neurons, npBAF complexes which contain ACTL6A/BAF53A and PHF10/BAF45A, are exchanged for homologous alternative ACTL6B/BAF53B and DPF1/BAF45B or DPF3/BAF45C subunits in neuron-specific complexes (nBAF). The npBAF complex is essential for the self-renewal/proliferative capacity of the multipotent neural stem cells. The nBAF complex along with CREST plays a role regulating the activity of genes essential for dendrite growth. In Homo sapiens (Human), this protein is Zinc finger protein neuro-d4.